The sequence spans 308 residues: Ribosomal RNA small subunit methyltransferase H (308 aa).

S-adenosyl-L-methionine contacts are provided by residues 32–34 (AGH), aspartate 52, phenylalanine 79, aspartate 100, and glutamine 107.

It belongs to the methyltransferase superfamily. RsmH family.

Its subcellular location is the cytoplasm. It carries out the reaction cytidine(1402) in 16S rRNA + S-adenosyl-L-methionine = N(4)-methylcytidine(1402) in 16S rRNA + S-adenosyl-L-homocysteine + H(+). Functionally, specifically methylates the N4 position of cytidine in position 1402 (C1402) of 16S rRNA. This chain is Ribosomal RNA small subunit methyltransferase H, found in Mycoplasma mycoides subsp. mycoides SC (strain CCUG 32753 / NCTC 10114 / PG1).